The following is a 249-amino-acid chain: O-methyltransferase adaD (249 aa).

Low complexity predominate over residues 1 to 15 (MSSVTLTTTTTTTST). Residues 1–26 (MSSVTLTTTTTTTSTPPKPTPKDEPQ) are disordered.

Belongs to the methyltransferase superfamily.

It carries out the reaction 2-acetyl-3,4a,8,10,11,12a-hexahydroxy-1,4,4a,5,12,12a-hexahydrotetracene-1,12-dione + S-adenosyl-L-methionine = TAN-1612 + S-adenosyl-L-homocysteine + H(+). It participates in secondary metabolite biosynthesis. Functionally, O-methyltransferase; part of the gene cluster that mediates the biosynthesis of the linear tetracyclic TAN-1612 neuropeptide Y receptor antagonist. The decaketide backbone of TAN-1612 is synthesized by the non-reducing polyketide synthase adaA via condensation of one acetyl-CoA starter unit with 9 malonyl-CoA units. The FAD-dependent monooxygenase adaC then performs hydroxylation at C2 while the polaketide chain is still attached to the NRPKS adaA. The alpha-hydroxylation step at C2 appears to be crucial for the following C18-C1 Claisen cyclization and release of the C9-hydroxyl version of TAN-1612 from the NRPKS adaA, two steps performed by the lactamase-like protein adaB. Finally, the O-methyltransferase adaD performs the C9 O-methylation to complete the biosynthesis of TAN-1612. In Aspergillus niger (strain ATCC MYA-4892 / CBS 513.88 / FGSC A1513), this protein is O-methyltransferase adaD.